Consider the following 130-residue polypeptide: Small ribosomal subunit protein uS8 (130 aa).

Belongs to the universal ribosomal protein uS8 family. In terms of assembly, part of the 30S ribosomal subunit. Contacts proteins S5 and S12.

Functionally, one of the primary rRNA binding proteins, it binds directly to 16S rRNA central domain where it helps coordinate assembly of the platform of the 30S subunit. This is Small ribosomal subunit protein uS8 from Acidiphilium cryptum (strain JF-5).